The chain runs to 446 residues: Exodeoxyribonuclease 7 large subunit (446 aa).

Belongs to the XseA family. Heterooligomer composed of large and small subunits.

The protein localises to the cytoplasm. It carries out the reaction Exonucleolytic cleavage in either 5'- to 3'- or 3'- to 5'-direction to yield nucleoside 5'-phosphates.. Functionally, bidirectionally degrades single-stranded DNA into large acid-insoluble oligonucleotides, which are then degraded further into small acid-soluble oligonucleotides. The polypeptide is Exodeoxyribonuclease 7 large subunit (Staphylococcus carnosus (strain TM300)).